A 1462-amino-acid chain; its full sequence is METKRRYKMYKVKKHWVTIAVASGLITLGTTTLGSSVSAETEQQTSDKVVTQKSEDDKAASESSQTDAPKTKQAQTEQTQAQSQANVADTSTSITKETPSQNITTQANSDDKTVTNTKSEEAQTSEERTKQAEEAQATASSQALTQAKAELTKQRQTAAQENKNPVDLAAIPNVKQIDGKYYYIGSDGQPKKNFALTVNNKVLYFDKNTGALTDTSQYQFKQGLTKLNNDYTPHNQIVNFENTSLETIDNYVTADSWYRPKDILKNGKTWTASSESDLRPLLMSWWPDKQTQIAYLNYMNQQGLGTGENYTADSSQESLNLAAQTVQVKIETKISQTQQTQWLRDIINSFVKTQPNWNSQTESDTSAGEKDHLQGGALLYSNSDKTAYANSDYRLLNRTPTSQTGKPKYFEDNSSGGYDFLLANDIDNSNPVVQAEQLNWLHYLMNYGSIVANDPEANFDGVRVDAVDNVNADLLQIASDYLKAHYGVDKSEKNAINHLSILEAWSDNDPQYNKDTKGAQLPIDNKLRLSLLYALTRPLEKDASNKNEIRSGLEPVITNSLNNRSAEGKNSERMANYIFIRAHDSEVQTVIAKIIKAQINPKTDGLTFTLDELKQAFKIYNEDMRQAKKKYTQSNIPTAYALMLSNKDSITRLYYGDMYSDDGQYMATKSPYYDAIDTLLKARIKYAAGGQDMKITYVEGDKSHMDWDYTGVLTSVRYGTGANEATDQGSEATKTQGMAVITSNNPSLKLNQNDKVIVNMGTAHKNQEYRPLLLTTKDGLTSYTSDAAAKSLYRKTNDKGELVFDASDIQGYLNPQVSGYLAVWVPVGASDNQDVRVAASNKANATGQVYESSSALDSQLIYEGFSNFQDFVTKDSDYTNKKIAQNVQLFKSWGVTSFEMAPQYVSSEDGSFLDSIIQNGYAFEDRYDLAMSKNNKYGSQQDMINAVKALHKSGIQVIADWVPDQIYNLPGKEVVTATRVNDYGEYRKDSEIKNTLYAANTKSNGKDYQAKYGGAFLSELAAKYPSIFNRTQISNGKKIDPSEKITAWKAKYFNGTNILGRGVGYVLKDNASDKYFELKGNQTYLPKQMTNKEASTGFVNDGNGMTFYSTSGYQAKNSFVQDAKGNWYYFDNNGHMVYGLQHLNGEVQYFLSNGVQLRESFLENADGSKNYFGHLGNRYSNGYYSFDNDSKWRYFDASGVMAVGLKTINGNTQYFDQDGYQVKGAWITGSDGKKRYFDDGSGNMAVNRFANDKNGDWYYLNSDGIALVGVQTINGKTYYFGQDGKQIKGKIITDNGKLKYFLANSGELARNIFATDSQNNWYYFGSDGVAVTGSQTIAGKKLYFASDGKQVKGSFVTYNGKVHYYHADSGELQVNRFEADKDGNWYYLDSNGEALTGSQRINGQRVFFTREGKQVKGDVAYDERGLLRYYDKNSGNMVYNKVVTLANGRRIGIDRWGIARYY.

The tract at residues 35–164 (SSVSAETEQQ…RQTAAQENKN (130 aa)) is disordered. Over residues 37–52 (VSAETEQQTSDKVVTQ) the composition is skewed to polar residues. A compositionally biased stretch (low complexity) spans 71 to 85 (TKQAQTEQTQAQSQA). Polar residues predominate over residues 86-108 (NVADTSTSITKETPSQNITTQAN). A compositionally biased stretch (basic and acidic residues) spans 109 to 133 (SDDKTVTNTKSEEAQTSEERTKQAE). The span at 134–149 (EAQATASSQALTQAKA) shows a compositional bias: low complexity. The segment covering 154 to 163 (QRQTAAQENK) has biased composition (polar residues). 14 Cell wall-binding repeats span residues 171-190 (IPNV…DGQP), 192-211 (KNFA…NTGA), 1095-1115 (STGF…GYQA), 1116-1136 (KNSF…NGHM), 1137-1156 (VYGL…NGVQ), 1180-1201 (SNGY…SGVM), 1202-1221 (AVGL…DGYQ), 1223-1244 (KGAW…SGNM), 1246-1266 (VNRF…DGIA), 1267-1286 (LVGV…DGKQ), 1310-1330 (RNIF…DGVA), 1331-1350 (VTGS…DGKQ), 1352-1372 (KGSF…SGEL), and 1374-1394 (VNRF…NGEA).

Belongs to the glycosyl hydrolase 70 family.

It localises to the secreted. The catalysed reaction is [(1-&gt;6)-alpha-D-glucosyl](n) + sucrose = [(1-&gt;6)-alpha-D-glucosyl](n+1) + D-fructose. Its function is as follows. Production of extracellular glucans, that are thought to play a key role in the development of the dental plaque because of their ability to adhere to smooth surfaces and mediate the aggregation of bacterial cells and food debris. The polypeptide is Glucosyltransferase-S (gtfD) (Streptococcus mutans serotype c (strain ATCC 700610 / UA159)).